Reading from the N-terminus, the 627-residue chain is Pro-interleukin-16 (627 aa).

3 disordered regions span residues 34-136 (HMPL…SIKQ), 162-267 (SSGE…LTRS), and 316-337 (GASPTSLSNEDSAANGCAETSG). Ser-217 bears the Phosphoserine mark. The span at 318–337 (SPTSLSNEDSAANGCAETSG) shows a compositional bias: polar residues. Positions 401-497 (KQLDSIHVTI…IVTRKLTPET (97 aa)) are interaction with PPP1R12A, PPP1R12B and PPP1R12C. 2 consecutive PDZ domains span residues 407–492 (HVTI…VTRK) and 529–614 (TVTL…IKRK).

Homotetramer. Pro-interleukin-16 interacts (via PDZ 2 domain) with PPP1R12A, PPP1R12B and PPP1R12C. Pro-interleukin-16 interacts with GRIN2A. Pro-interleukin-16 interacts with GABPB1. Pro-interleukin-16 interacts (via PDZ 3 domain) with HDAC3.

The protein resides in the secreted. It localises to the cytoplasm. Its subcellular location is the nucleus. Interleukin-16 stimulates a migratory response in CD4+ lymphocytes, monocytes, and eosinophils. Primes CD4+ T-cells for IL-2 and IL-15 responsiveness. Also induces T-lymphocyte expression of interleukin 2 receptor. Ligand for CD4. Its function is as follows. Pro-interleukin-16 is involved in cell cycle progression in T-cells. Appears to be involved in transcriptional regulation of SKP2 and is probably part of a transcriptional repression complex on the core promoter of the SKP2 gene. May act as a scaffold for GABPB1 (the DNA-binding subunit the GABP transcription factor complex) and HDAC3 thus maintaining transcriptional repression and blocking cell cycle progression in resting T-cells. In Saimiri sciureus (Common squirrel monkey), this protein is Pro-interleukin-16 (IL16).